A 428-amino-acid polypeptide reads, in one-letter code: 3-phosphoshikimate 1-carboxyvinyltransferase (428 aa).

K20, S21, and R25 together coordinate 3-phosphoshikimate. K20 contacts phosphoenolpyruvate. Positions 92 and 120 each coordinate phosphoenolpyruvate. 4 residues coordinate 3-phosphoshikimate: S166, Q168, D314, and K341. Q168 contacts phosphoenolpyruvate. D314 serves as the catalytic Proton acceptor. R345 and R387 together coordinate phosphoenolpyruvate.

This sequence belongs to the EPSP synthase family. In terms of assembly, monomer.

The protein resides in the cytoplasm. It catalyses the reaction 3-phosphoshikimate + phosphoenolpyruvate = 5-O-(1-carboxyvinyl)-3-phosphoshikimate + phosphate. It participates in metabolic intermediate biosynthesis; chorismate biosynthesis; chorismate from D-erythrose 4-phosphate and phosphoenolpyruvate: step 6/7. Catalyzes the transfer of the enolpyruvyl moiety of phosphoenolpyruvate (PEP) to the 5-hydroxyl of shikimate-3-phosphate (S3P) to produce enolpyruvyl shikimate-3-phosphate and inorganic phosphate. In Listeria monocytogenes serovar 1/2a (strain ATCC BAA-679 / EGD-e), this protein is 3-phosphoshikimate 1-carboxyvinyltransferase.